We begin with the raw amino-acid sequence, 358 residues long: C-X-C chemokine receptor type 4 (358 aa).

Positions 1–25 are important for chemokine binding and signaling; the sequence is MDGFSGGIDINIFDSNSTENGSGDF. Residues 1-44 lie on the Extracellular side of the membrane; sequence MDGFSGGIDINIFDSNSTENGSGDFEDFSEPCFMHDNSDFNRIF. 2 N-linked (GlcNAc...) asparagine glycosylation sites follow: asparagine 16 and asparagine 20. Intrachain disulfides connect cysteine 32–cysteine 281 and cysteine 113–cysteine 190. A helical membrane pass occupies residues 45 to 67; sequence LPTIYSFIFLLGIIGNGLVVVVM. At 68–81 the chain is on the cytoplasmic side; that stretch reads GYQKKSRTMTDKYR. A helical transmembrane segment spans residues 82–103; it reads LHLSVADLLFVFTLPFWSVDAA. Positions 98–101 are chemokine binding; it reads WSVD. Residues 104 to 114 are Extracellular-facing; it reads IGWYFKEFLCK. A helical membrane pass occupies residues 115–134; that stretch reads AVHVIYTVNLYSSVLILAFI. The segment at 117-121 is chemokine binding; that stretch reads HVIYT. Over 135 to 158 the chain is Cytoplasmic; it reads SLDRYLAIVHATNSQGSRKMLADK. Residues 139–151 are involved in dimerization; when bound to chemokine; that stretch reads YLAIVHATNSQGS. A helical membrane pass occupies residues 159–178; it reads VVYAGVWLPALLLTVPDLVF. Over 179–202 the chain is Extracellular; that stretch reads ARVSDENGQFVCDRIYPIDNRETW. The tract at residues 190–194 is chemokine binding, important for signaling; sequence CDRIY. A helical membrane pass occupies residues 203–223; sequence TVGFRFLHITVGLILPGLIIL. Topologically, residues 224 to 248 are cytoplasmic; the sequence is ICYCVIISKLSHSKGHQKRKALKTT. The helical transmembrane segment at 249–268 threads the bilayer; it reads VILILAFFACWLPYYVCLTT. The Extracellular segment spans residues 269 to 289; sequence DTFMLLGLLKADCIWENTLHK. Residues 290-309 traverse the membrane as a helical segment; sequence AISITEALAFFHCCLNPILY. Over 310–358 the chain is Cytoplasmic; sequence AFLGAKFKTSAQNAFTSVSRGSSLKILSKKRAGLSSVSTESESSSFHSS. The interval 338-358 is disordered; the sequence is KKRAGLSSVSTESESSSFHSS. Positions 344-358 are enriched in low complexity; sequence SSVSTESESSSFHSS.

Belongs to the G-protein coupled receptor 1 family. Monomer. Can form dimers. In terms of processing, sulfation is required for efficient binding of cxcl12/sdf-1alpha and promotes its dimerization. Post-translationally, O- and N-glycosylated.

It localises to the cell membrane. The protein localises to the cytoplasm. Its subcellular location is the nucleus. The protein resides in the early endosome. It is found in the late endosome. It localises to the lysosome. In terms of biological role, receptor for the C-X-C chemokine cxcl12/sdf-1. Transduces a signal by increasing the intracellular calcium ion level. Signaling with cxcl12/sdf-1 mediates the directional movement of mesodermal cells during gastrulation. May play a role in the migration of embryonic presumptive primordial germ cells (pPGCs). May also be involved in regulating migration of hematopoietic stem cells into the larval liver. The sequence is that of C-X-C chemokine receptor type 4 from Xenopus tropicalis (Western clawed frog).